Consider the following 96-residue polypeptide: (4S)-4-hydroxy-5-phosphonooxypentane-2,3-dione isomerase (96 aa).

The ABM domain occupies 2–91; it reads HVTLVEINVH…MTGPRKKRLF (90 aa).

The protein belongs to the LsrG family. Homodimer.

It is found in the cytoplasm. It catalyses the reaction (2S)-2-hydroxy-3,4-dioxopentyl phosphate = 3-hydroxy-2,4-dioxopentyl phosphate. In terms of biological role, involved in the degradation of phospho-AI-2, thereby terminating induction of the lsr operon and closing the AI-2 signaling cycle. Catalyzes the conversion of (4S)-4-hydroxy-5-phosphonooxypentane-2,3-dione (P-DPD) to 3-hydroxy-5-phosphonooxypentane-2,4-dione (P-HPD). This chain is (4S)-4-hydroxy-5-phosphonooxypentane-2,3-dione isomerase, found in Escherichia coli O157:H7.